The primary structure comprises 529 residues: MQQRRPIRRALLSVSDKAGIIEFAQALSQRGIELLSTGGTARLLADAGLPVTEVSDYTGFPEMMDGRVKTLHPKVHGGILGRRGQDDGIMAQHGIQPIDIVVVNLYPFAQTVARPDCSLEDAVENIDIGGPTMVRSAAKNHKDVAIVVKSSDYPAIITELDNNDGSLTYPTRFNLAIKAFEHTAAYDSMIANYFGTLVPPYHGDTEQPSGHFPRTLNLNYIKKQDMRYGENSHQQAAFYIEEDVKEASVATAQQLQGKALSYNNIADTDAALECVKEFSEPACVIVKHANPCGVAIGDSILAAYERAYQTDPTSAFGGIIAFNRELDAATANAIISRQFVEVIIAPTVSSDALALLAAKQNVRVLTCGQWQARSAGLDFKRVNGGLLVQERDLGMVTAADLRVVSKRQPTEQELRDALFCWKVAKFVKSNAIVYARDNMTIGIGAGQMSRVYSAKIAGIKAADEGLEVAGSAMASDAFFPFRDGIDAAAAVGITCVIQPGGSIRDDEVIAAADEHGIAMIFTDMRHFRH.

An MGS-like domain is found at 1–148 (MQQRRPIRRA…KNHKDVAIVV (148 aa)).

The protein belongs to the PurH family.

It carries out the reaction (6R)-10-formyltetrahydrofolate + 5-amino-1-(5-phospho-beta-D-ribosyl)imidazole-4-carboxamide = 5-formamido-1-(5-phospho-D-ribosyl)imidazole-4-carboxamide + (6S)-5,6,7,8-tetrahydrofolate. The catalysed reaction is IMP + H2O = 5-formamido-1-(5-phospho-D-ribosyl)imidazole-4-carboxamide. It functions in the pathway purine metabolism; IMP biosynthesis via de novo pathway; 5-formamido-1-(5-phospho-D-ribosyl)imidazole-4-carboxamide from 5-amino-1-(5-phospho-D-ribosyl)imidazole-4-carboxamide (10-formyl THF route): step 1/1. Its pathway is purine metabolism; IMP biosynthesis via de novo pathway; IMP from 5-formamido-1-(5-phospho-D-ribosyl)imidazole-4-carboxamide: step 1/1. The polypeptide is Bifunctional purine biosynthesis protein PurH (Yersinia pseudotuberculosis serotype IB (strain PB1/+)).